Here is a 435-residue protein sequence, read N- to C-terminus: Dual specificity mitogen-activated protein kinase kinase jkk-1 (435 aa).

Residues 35–49 (RDRRSTSVDQKHKEC) show a composition bias toward basic and acidic residues. Residues 35 to 90 (RDRRSTSVDQKHKECSSTSSSPQHQRPNNIGYLTSPMERKFTPLSMKPSPSRRDTE) form a disordered region. Polar residues predominate over residues 50 to 66 (SSTSSSPQHQRPNNIGY). The region spanning 122–385 (IHIISLLGSG…YRQLMKHDFY (264 aa)) is the Protein kinase domain. ATP-binding positions include 128–136 (LGSGSCGVV) and K149. The Proton acceptor role is filled by D246.

Belongs to the protein kinase superfamily. STE Ser/Thr protein kinase family. MAP kinase kinase subfamily. In terms of assembly, interacts with unc-16. Mg(2+) serves as cofactor. Expressed in most neurons, including nerve ring, head ganglions, dorsal and ventral nerve cords and tail ganglions.

It localises to the cytoplasm. The protein localises to the perikaryon. It is found in the cell projection. Its subcellular location is the axon. The catalysed reaction is L-seryl-[protein] + ATP = O-phospho-L-seryl-[protein] + ADP + H(+). It catalyses the reaction L-threonyl-[protein] + ATP = O-phospho-L-threonyl-[protein] + ADP + H(+). The enzyme catalyses L-tyrosyl-[protein] + ATP = O-phospho-L-tyrosyl-[protein] + ADP + H(+). Dual specificity protein kinase which acts as an essential component of the JNK signal transduction pathway. May phosphorylate jnk-1. Plays a role in coordinating locomotion via D-type GABAergic motoneurons and in regulating synaptic vesicle transport downstream of adapter protein unc-16 and probably by activating jnk-1. Positively regulates lifespan. Upon environmental stress such as heat stress regulates daf-16 nuclear translocation probably by activating jnk-1. Regulates germline cell apoptosis in response to heavy metals such as Cu(2+) and to arsenite. The chain is Dual specificity mitogen-activated protein kinase kinase jkk-1 from Caenorhabditis elegans.